Reading from the N-terminus, the 805-residue chain is Leucine--tRNA ligase (805 aa).

The 'HIGH' region signature appears at 40 to 51 (PYPSGQGLHVGH). Residues 577–581 (KMSKS) carry the 'KMSKS' region motif. An ATP-binding site is contributed by K580.

Belongs to the class-I aminoacyl-tRNA synthetase family.

The protein localises to the cytoplasm. The catalysed reaction is tRNA(Leu) + L-leucine + ATP = L-leucyl-tRNA(Leu) + AMP + diphosphate. The chain is Leucine--tRNA ligase from Limosilactobacillus fermentum (strain NBRC 3956 / LMG 18251) (Lactobacillus fermentum).